A 109-amino-acid chain; its full sequence is ATP-dependent Clp protease adapter protein ClpS 2 (109 aa).

The interval 1–24 (MAGDGGRSGPSTPSTSVITKTKPR) is disordered.

The protein belongs to the ClpS family. In terms of assembly, binds to the N-terminal domain of the chaperone ClpA.

Functionally, involved in the modulation of the specificity of the ClpAP-mediated ATP-dependent protein degradation. The protein is ATP-dependent Clp protease adapter protein ClpS 2 of Rhodopseudomonas palustris (strain ATCC BAA-98 / CGA009).